Consider the following 508-residue polypeptide: Photosystem II CP47 reaction center protein (508 aa).

6 helical membrane passes run 21 to 36 (SVHI…WAGS), 101 to 115 (IVFS…IWHW), 140 to 156 (GIHL…FGAF), 203 to 218 (IAAG…FHLS), 237 to 252 (VLSS…AFVV), and 457 to 472 (SFAL…HGAR).

This sequence belongs to the PsbB/PsbC family. PsbB subfamily. In terms of assembly, PSII is composed of 1 copy each of membrane proteins PsbA, PsbB, PsbC, PsbD, PsbE, PsbF, PsbH, PsbI, PsbJ, PsbK, PsbL, PsbM, PsbT, PsbX, PsbY, PsbZ, Psb30/Ycf12, at least 3 peripheral proteins of the oxygen-evolving complex and a large number of cofactors. It forms dimeric complexes. It depends on Binds multiple chlorophylls. PSII binds additional chlorophylls, carotenoids and specific lipids. as a cofactor.

It is found in the plastid. The protein resides in the chloroplast thylakoid membrane. Functionally, one of the components of the core complex of photosystem II (PSII). It binds chlorophyll and helps catalyze the primary light-induced photochemical processes of PSII. PSII is a light-driven water:plastoquinone oxidoreductase, using light energy to abstract electrons from H(2)O, generating O(2) and a proton gradient subsequently used for ATP formation. This chain is Photosystem II CP47 reaction center protein, found in Gossypium hirsutum (Upland cotton).